Reading from the N-terminus, the 203-residue chain is Small ribosomal subunit protein uS4 (203 aa).

One can recognise an S4 RNA-binding domain in the interval 92–152 (LRLATVLLRA…EKSRKLVPFI (61 aa)).

Belongs to the universal ribosomal protein uS4 family. As to quaternary structure, part of the 30S ribosomal subunit. Contacts protein S5. The interaction surface between S4 and S5 is involved in control of translational fidelity.

Functionally, one of the primary rRNA binding proteins, it binds directly to 16S rRNA where it nucleates assembly of the body of the 30S subunit. Its function is as follows. With S5 and S12 plays an important role in translational accuracy. The polypeptide is Small ribosomal subunit protein uS4 (Thermobifida fusca (strain YX)).